The sequence spans 365 residues: Cobalt-precorrin-5B C(1)-methyltransferase (365 aa).

This sequence belongs to the CbiD family.

The enzyme catalyses Co-precorrin-5B + S-adenosyl-L-methionine = Co-precorrin-6A + S-adenosyl-L-homocysteine. Its pathway is cofactor biosynthesis; adenosylcobalamin biosynthesis; cob(II)yrinate a,c-diamide from sirohydrochlorin (anaerobic route): step 6/10. Functionally, catalyzes the methylation of C-1 in cobalt-precorrin-5B to form cobalt-precorrin-6A. The sequence is that of Cobalt-precorrin-5B C(1)-methyltransferase from Pseudomonas fluorescens (strain Pf0-1).